We begin with the raw amino-acid sequence, 251 residues long: DNA repair protein RecO (251 aa).

This sequence belongs to the RecO family.

Functionally, involved in DNA repair and RecF pathway recombination. In Staphylococcus saprophyticus subsp. saprophyticus (strain ATCC 15305 / DSM 20229 / NCIMB 8711 / NCTC 7292 / S-41), this protein is DNA repair protein RecO.